The chain runs to 229 residues: Potassium/proton antiporter CemA (229 aa).

4 helical membrane-spanning segments follow: residues 7–27 (FTPLPYLASIVFLPWWISFSF), 114–134 (IISFAILSGYSILGNEELVVL), 154–174 (ILLLTDLCIGFHSPHGWELMI), and 189–209 (IISGLVSTFPVILDTIFKYWI).

It belongs to the CemA family.

It is found in the plastid. The protein resides in the chloroplast inner membrane. The enzyme catalyses K(+)(in) + H(+)(out) = K(+)(out) + H(+)(in). Contributes to K(+)/H(+) antiport activity by supporting proton efflux to control proton extrusion and homeostasis in chloroplasts in a light-dependent manner to modulate photosynthesis. Prevents excessive induction of non-photochemical quenching (NPQ) under continuous-light conditions. Indirectly promotes efficient inorganic carbon uptake into chloroplasts. This Nandina domestica (Heavenly bamboo) protein is Potassium/proton antiporter CemA.